A 2287-amino-acid chain; its full sequence is Serine/threonine-protein kinase MEC1 (2287 aa).

An FAT domain is found at 1310-1864 (TLAKKSLETD…LWYISILLNS (555 aa)). The 304-residue stretch at 1968–2271 (FSSQYMVFNS…QVEALTQESC (304 aa)) folds into the PI3K/PI4K catalytic domain. The G-loop stretch occupies residues 1974–1980 (VFNSLKK). The segment at 2140-2148 (GLGDRHCEN) is catalytic loop. Positions 2160–2184 (HVDFDCLFEKGKKLPVPEIVPFRLT) are activation loop. The FATC domain maps to 2255 to 2287 (LALSVSGQVEALTQESCSVENLSKMYIGWLPFW).

Belongs to the PI3/PI4-kinase family. ATM subfamily.

The protein localises to the nucleus. The catalysed reaction is L-seryl-[protein] + ATP = O-phospho-L-seryl-[protein] + ADP + H(+). The enzyme catalyses L-threonyl-[protein] + ATP = O-phospho-L-threonyl-[protein] + ADP + H(+). Serine/threonine protein kinase which activates checkpoint signaling upon genotoxic stresses such as ionizing radiation (IR), ultraviolet light (UV), or DNA replication stalling, thereby acting as a DNA damage sensor. Recognizes the substrate consensus sequence [ST]-Q. Recruited to DNA lesions in order to initiate the DNA repair by homologous recombination. Phosphorylates histone H2A to form H2AS128ph (gamma-H2A) at sites of DNA damage, also involved in the regulation of DNA damage response mechanism. Required for cell growth and meiotic recombination. This Kluyveromyces lactis (strain ATCC 8585 / CBS 2359 / DSM 70799 / NBRC 1267 / NRRL Y-1140 / WM37) (Yeast) protein is Serine/threonine-protein kinase MEC1 (MEC1).